Consider the following 482-residue polypeptide: tRNA sulfurtransferase (482 aa).

The region spanning 61-165 is the THUMP domain; it reads KETLEVLTQT…NDKLNQVIER (105 aa). Residues 183–184, K265, G287, and Q296 contribute to the ATP site; that span reads LI. C344 and C456 are oxidised to a cystine. One can recognise a Rhodanese domain in the interval 404–482; it reads VAEHAVVLDI…GFHNVKVYRP (79 aa). C456 serves as the catalytic Cysteine persulfide intermediate.

Belongs to the ThiI family.

Its subcellular location is the cytoplasm. It catalyses the reaction [ThiI sulfur-carrier protein]-S-sulfanyl-L-cysteine + a uridine in tRNA + 2 reduced [2Fe-2S]-[ferredoxin] + ATP + H(+) = [ThiI sulfur-carrier protein]-L-cysteine + a 4-thiouridine in tRNA + 2 oxidized [2Fe-2S]-[ferredoxin] + AMP + diphosphate. The catalysed reaction is [ThiS sulfur-carrier protein]-C-terminal Gly-Gly-AMP + S-sulfanyl-L-cysteinyl-[cysteine desulfurase] + AH2 = [ThiS sulfur-carrier protein]-C-terminal-Gly-aminoethanethioate + L-cysteinyl-[cysteine desulfurase] + A + AMP + 2 H(+). It participates in cofactor biosynthesis; thiamine diphosphate biosynthesis. Functionally, catalyzes the ATP-dependent transfer of a sulfur to tRNA to produce 4-thiouridine in position 8 of tRNAs, which functions as a near-UV photosensor. Also catalyzes the transfer of sulfur to the sulfur carrier protein ThiS, forming ThiS-thiocarboxylate. This is a step in the synthesis of thiazole, in the thiamine biosynthesis pathway. The sulfur is donated as persulfide by IscS. This is tRNA sulfurtransferase from Vibrio atlanticus (strain LGP32) (Vibrio splendidus (strain Mel32)).